Consider the following 202-residue polypeptide: Small ribosomal subunit protein uS5 (202 aa).

One can recognise an S5 DRBM domain in the interval Leu50–Val113.

The protein belongs to the universal ribosomal protein uS5 family. As to quaternary structure, part of the 30S ribosomal subunit. Contacts protein S4.

Its function is as follows. With S4 and S12 plays an important role in translational accuracy. In Pyrobaculum arsenaticum (strain DSM 13514 / JCM 11321 / PZ6), this protein is Small ribosomal subunit protein uS5.